Reading from the N-terminus, the 119-residue chain is UPF0102 protein Sare_1228 (119 aa).

It belongs to the UPF0102 family.

This Salinispora arenicola (strain CNS-205) protein is UPF0102 protein Sare_1228.